The chain runs to 428 residues: MSIIAITVFVAGYALIASDRVSKTRVALTCAAIMVGAGIVGSDDVFYSHEAGIDWDVIFLLLGMMIIVSVLRHTGVFEYVAIWAVKRANAAPLRIMILLVLVTALGSALLDNVTTVLLIAPVTLLVCDRLGVNSTPFLVAEVFASNVGGAATLVGDPPNIIIASRAGLTFNDFLIHMAPAVLVVMIALIGLLPWLLGSVTAEPDRVADVLSLNEREAIHDRGLLIKCGVVLVLVFAAFIAHPVLHIQPSLVALLGAGVLVRFSGLERSDYLSSVEWDTLLFFAGLFVMVGALVKTGVVEQLARAATELTGGNELLTVGLILGISAPVSGIIDNIPYVATMTPIVTELVAAMPGHVHPDTFWWALALSADFGGNLTAVAASANVVMLGIARRSGTPISFWKFTRKGAVVTAVSLVLSAVYLWLRYFVFG.

The next 10 helical transmembrane spans lie at valine 26–phenylalanine 46, alanine 51–leucine 71, alanine 90–leucine 110, threonine 135–glycine 155, methionine 177–glycine 197, leucine 223–valine 243, threonine 278–valine 298, leucine 314–isoleucine 334, threonine 359–alanine 379, and valine 407–phenylalanine 427.

It belongs to the CitM (TC 2.A.11) transporter family.

It is found in the cell membrane. This is an uncharacterized protein from Mycobacterium tuberculosis (strain CDC 1551 / Oshkosh).